The primary structure comprises 466 residues: Fumarate hydratase class II (466 aa).

Substrate contacts are provided by residues 100–102 (SGT), Arg128, 131–134 (HPND), 141–143 (STN), and Thr189. His190 serves as the catalytic Proton donor/acceptor. Ser320 is a catalytic residue. Residues Ser321 and 326–328 (KVN) contribute to the substrate site.

It belongs to the class-II fumarase/aspartase family. Fumarase subfamily. In terms of assembly, homotetramer.

It localises to the cytoplasm. It catalyses the reaction (S)-malate = fumarate + H2O. It functions in the pathway carbohydrate metabolism; tricarboxylic acid cycle; (S)-malate from fumarate: step 1/1. Its function is as follows. Involved in the TCA cycle. Catalyzes the stereospecific interconversion of fumarate to L-malate. The chain is Fumarate hydratase class II from Prochlorococcus marinus (strain MIT 9313).